The primary structure comprises 170 residues: uncharacterized protein (170 aa).

This is an uncharacterized protein from Saccharomyces cerevisiae (strain ATCC 204508 / S288c) (Baker's yeast).